Here is a 328-residue protein sequence, read N- to C-terminus: Homeobox protein DLX-2 (328 aa).

Composition is skewed to polar residues over residues 16 to 28 and 52 to 72; these read QIAASSTYHQHQQ and ESPTLPVSTATDSSYYTNQQH. 3 disordered regions span residues 16-81, 211-270, and 300-328; these read QIAA…GGGG, WKSG…SSPS, and LHPTQTPQPHHHHHHHGGGGAPVSAGTIF. A DNA-binding region (homeobox) is located at residues 152-211; the sequence is VRKPRTIYSSFQLAALQRRFQKTQYLALPERAELAASLGLTQTQVKIWFQNRRSKFKKMW. Serine 232 carries the phosphoserine modification. Positions 250–264 are enriched in gly residues; sequence AGGGGPGSGGSGAGS.

It belongs to the distal-less homeobox family. Interacts (via homeobox DNA-binding domain) with POU4F2; this interaction enhances retinal ganglion cell (RGC) differentiation.

It is found in the nucleus. In terms of biological role, acts as a transcriptional activator. Activates transcription of CGA/alpha-GSU, via binding to the downstream activin regulatory element (DARE) in the gene promoter. Plays a role in terminal differentiation of interneurons, such as amacrine and bipolar cells in the developing retina. Likely to play a regulatory role in the development of the ventral forebrain. May play a role in craniofacial patterning and morphogenesis. In Homo sapiens (Human), this protein is Homeobox protein DLX-2 (DLX2).